Consider the following 174-residue polypeptide: Ribosome maturation factor RimM (174 aa).

Residues 98 to 171 form the PRC barrel domain; that stretch reads EDEFYFHEII…KIKIHVMEGL (74 aa).

Belongs to the RimM family. As to quaternary structure, binds ribosomal protein uS19.

The protein localises to the cytoplasm. Functionally, an accessory protein needed during the final step in the assembly of 30S ribosomal subunit, possibly for assembly of the head region. Essential for efficient processing of 16S rRNA. May be needed both before and after RbfA during the maturation of 16S rRNA. It has affinity for free ribosomal 30S subunits but not for 70S ribosomes. The chain is Ribosome maturation factor RimM from Bacillus velezensis (strain DSM 23117 / BGSC 10A6 / LMG 26770 / FZB42) (Bacillus amyloliquefaciens subsp. plantarum).